Here is a 390-residue protein sequence, read N- to C-terminus: Putative F-box protein At3g52320 (390 aa).

The F-box domain occupies 21 to 71 (VVFLPEIPEEMLIDILIRLPAKSLMRFKCVSKLWLSLITSRYFTNRFFKPS).

The sequence is that of Putative F-box protein At3g52320 from Arabidopsis thaliana (Mouse-ear cress).